The sequence spans 212 residues: Ras-related protein Rab-2A (212 aa).

Ala2 carries the N-acetylalanine modification. The tract at residues 2–19 (AYAYLFKYIIIGDTGVGK) is required for interaction with PRKCI. GTP is bound by residues Gly16, Val17, Gly18, Lys19, Ser20, Cys21, and Thr38. Position 20 (Ser20) interacts with Mg(2+). Positions 37-42 (LTMGVE) match the Switch 1 motif. Mg(2+)-binding residues include Thr38 and Asp61. Residues 63 to 72 (AGQESFRSIT) carry the Switch 2 motif. GTP is bound by residues Gly64, Asn119, Lys120, Asp122, Ala150, and Lys151. A disordered region spans residues 190 to 212 (QHAATNASHGGNQGGQQAGGGCC). Gly residues predominate over residues 200 to 212 (GNQGGQQAGGGCC). S-geranylgeranyl cysteine attachment occurs at residues Cys211 and Cys212.

The protein belongs to the small GTPase superfamily. Rab family. Interacts with PRKCI. Interacts with TRIP11. Interacts (in GTP-bound form) with GARIN1B. Interacts (GTP-bound) with HOPS complex component VPS39; interaction contributes to obtaining a functional HOPS complex that promotes autophagosome-lysosome membrane fusion driven by STX17-SNAP29-VAMP8. May interact with VPS41. Requires Mg(2+) as cofactor. Post-translationally, prenylated. Prenylation is required for association with cellular membranes.

The protein localises to the endoplasmic reticulum-Golgi intermediate compartment membrane. It localises to the melanosome. Its subcellular location is the endoplasmic reticulum membrane. The protein resides in the golgi apparatus membrane. It is found in the cytoplasmic vesicle. The protein localises to the secretory vesicle. It localises to the acrosome. Its subcellular location is the autophagosome membrane. It catalyses the reaction GTP + H2O = GDP + phosphate + H(+). Regulated by guanine nucleotide exchange factors (GEFs) which promote the exchange of bound GDP for free GTP, GTPase activating proteins (GAPs) which increase the GTP hydrolysis activity, and GDP dissociation inhibitors (GDIs) which inhibit the dissociation of the nucleotide from the GTPase. Functionally, the small GTPases Rab are key regulators of intracellular membrane trafficking, from the formation of transport vesicles to their fusion with membranes. Rabs cycle between active GTP-bound and inactive GDP-bound states. In their active state, drive transport of vesicular carriers from donor organelles to acceptor organelles to regulate the membrane traffic that maintains organelle identity and morphology. RAB2A regulates autophagy by promoting autophagosome-lysosome fusion via recruitment of the HOPS endosomal tethering complex; this process involves autophagosomal RAB2A and lysosomal RAB39A recruitment of HOPS subcomplexes VPS39-VPS11 and VPS41-VPS16-VPS18-VPS33A, respectively, which assemble into a functional complex to mediate membrane tethering and SNAREs-driven membrane fusion. Required for protein transport from the endoplasmic reticulum to the Golgi complex. Regulates the compacted morphology of the Golgi. Together with RAB2B, redundantly required for efficient autophagic flux. This is Ras-related protein Rab-2A (Rab2a) from Rattus norvegicus (Rat).